The chain runs to 962 residues: Integrator complex subunit 7 (962 aa).

Phosphoserine is present on residues serine 338 and serine 809.

Belongs to the Integrator subunit 7 family. As to quaternary structure, component of the Integrator complex, composed of core subunits INTS1, INTS2, INTS3, INTS4, INTS5, INTS6, INTS7, INTS8, INTS9/RC74, INTS10, INTS11/CPSF3L, INTS12, INTS13, INTS14 and INTS15. The core complex associates with protein phosphatase 2A subunits PPP2CA and PPP2R1A, to form the Integrator-PP2A (INTAC) complex. Interacts with NABP2.

The protein localises to the nucleus. Its subcellular location is the chromosome. It localises to the cytoplasm. Its function is as follows. Component of the integrator complex, a multiprotein complex that terminates RNA polymerase II (Pol II) transcription in the promoter-proximal region of genes. The integrator complex provides a quality checkpoint during transcription elongation by driving premature transcription termination of transcripts that are unfavorably configured for transcriptional elongation: the complex terminates transcription by (1) catalyzing dephosphorylation of the C-terminal domain (CTD) of Pol II subunit POLR2A/RPB1 and SUPT5H/SPT5, (2) degrading the exiting nascent RNA transcript via endonuclease activity and (3) promoting the release of Pol II from bound DNA. The integrator complex is also involved in terminating the synthesis of non-coding Pol II transcripts, such as enhancer RNAs (eRNAs), small nuclear RNAs (snRNAs), telomerase RNAs and long non-coding RNAs (lncRNAs). May be not involved in the recruitment of cytoplasmic dynein to the nuclear envelope by different components of the INT complex. Plays a role in DNA damage response (DDR) signaling during the S phase. The polypeptide is Integrator complex subunit 7 (Homo sapiens (Human)).